We begin with the raw amino-acid sequence, 135 residues long: Small ribosomal subunit protein uS9 (135 aa).

Residues 96–135 (SADNRKPLKTEGHLSRDPRAKERRKYGLKKARKAPQFSKR) form a disordered region. Residues 97-115 (ADNRKPLKTEGHLSRDPRA) are compositionally biased toward basic and acidic residues. Over residues 116-135 (KERRKYGLKKARKAPQFSKR) the composition is skewed to basic residues.

Belongs to the universal ribosomal protein uS9 family.

In Prochlorococcus marinus (strain MIT 9313), this protein is Small ribosomal subunit protein uS9.